A 126-amino-acid chain; its full sequence is uncharacterized protein (126 aa).

The helical transmembrane segment at L5–S25 threads the bilayer.

The protein localises to the membrane. This is an uncharacterized protein from Saccharomyces cerevisiae (strain ATCC 204508 / S288c) (Baker's yeast).